The sequence spans 243 residues: Probable transcriptional regulatory protein Tbd_2215 (243 aa).

It belongs to the TACO1 family.

The protein resides in the cytoplasm. This Thiobacillus denitrificans (strain ATCC 25259 / T1) protein is Probable transcriptional regulatory protein Tbd_2215.